A 402-amino-acid polypeptide reads, in one-letter code: Putative F-box protein At1g70970 (402 aa).

One can recognise an F-box domain in the interval 4–52; the sequence is SSSETLHVEDLQTEIMSWLPLKSLLRFVIVSKKWASIIRGEQFKALYLR.

In Arabidopsis thaliana (Mouse-ear cress), this protein is Putative F-box protein At1g70970.